A 291-amino-acid polypeptide reads, in one-letter code: Quinol oxidase subunit 2 (291 aa).

The N-terminal stretch at M1–K28 is a signal peptide. The next 2 helical transmembrane spans lie at S49–I69 and L91–V111.

It belongs to the cytochrome c oxidase subunit 2 family.

The protein localises to the cell membrane. The enzyme catalyses 2 a quinol + O2 = 2 a quinone + 2 H2O. In terms of biological role, catalyzes quinol oxidation with the concomitant reduction of oxygen to water. Subunit II transfers the electrons from a quinol to the binuclear center of the catalytic subunit I. This chain is Quinol oxidase subunit 2, found in Bacillus cereus (strain ATCC 14579 / DSM 31 / CCUG 7414 / JCM 2152 / NBRC 15305 / NCIMB 9373 / NCTC 2599 / NRRL B-3711).